A 431-amino-acid polypeptide reads, in one-letter code: Glutamate--tRNA ligase 2 (431 aa).

The 'HIGH' region motif lies at 6-16; the sequence is PSPTGDMHIGN. A 'KMSKS' region motif is present at residues 235 to 239; that stretch reads KMSKR. K238 lines the ATP pocket.

Belongs to the class-I aminoacyl-tRNA synthetase family. Glutamate--tRNA ligase type 1 subfamily. As to quaternary structure, monomer.

The protein resides in the cytoplasm. The catalysed reaction is tRNA(Glu) + L-glutamate + ATP = L-glutamyl-tRNA(Glu) + AMP + diphosphate. In terms of biological role, catalyzes the attachment of glutamate to tRNA(Glu) in a two-step reaction: glutamate is first activated by ATP to form Glu-AMP and then transferred to the acceptor end of tRNA(Glu). The sequence is that of Glutamate--tRNA ligase 2 from Campylobacter jejuni subsp. doylei (strain ATCC BAA-1458 / RM4099 / 269.97).